Consider the following 701-residue polypeptide: DNA ligase A (701 aa).

Positions Met1–Arg23 are disordered. NAD(+)-binding positions include Asp49 to Asp53, Ser99 to Leu100, and Glu129. Lys131 acts as the N6-AMP-lysine intermediate in catalysis. Residues Arg152, Glu192, Lys308, and Lys332 each coordinate NAD(+). Cys426, Cys429, Cys445, and Cys451 together coordinate Zn(2+). The BRCT domain maps to Ser615–Glu701.

The protein belongs to the NAD-dependent DNA ligase family. LigA subfamily. It depends on Mg(2+) as a cofactor. Mn(2+) is required as a cofactor.

It catalyses the reaction NAD(+) + (deoxyribonucleotide)n-3'-hydroxyl + 5'-phospho-(deoxyribonucleotide)m = (deoxyribonucleotide)n+m + AMP + beta-nicotinamide D-nucleotide.. DNA ligase that catalyzes the formation of phosphodiester linkages between 5'-phosphoryl and 3'-hydroxyl groups in double-stranded DNA using NAD as a coenzyme and as the energy source for the reaction. It is essential for DNA replication and repair of damaged DNA. Probably the only ligase required for non-homologous end joining (NHEJ) repair of 3-overhangs. The chain is DNA ligase A from Mycolicibacterium smegmatis (strain ATCC 700084 / mc(2)155) (Mycobacterium smegmatis).